The primary structure comprises 527 residues: MDTSQLLTLWNDRASQLGVVDLSLLGVGAVIAFAWLFSGGKKARTPPGPRPLPILGNLLSIPTTHPWKIYDKWCRDNNSDLMYLRLPGGNGILVLNTMKAATDLLVKRSTIYSDRPQSIMLSDLMGMSWVFGLMQYGDAWKQHRRLFHREFEGSTAVRMHAQNAARRLLQRLLNSNVNYARDMQLTTGDMILSATYGITPKSEDDYFIKLAEGLVGALAVVAGGGFLVDLIPPMRWIPRWFPGGGFKKQADEWKGLGVTARSVPFNHVKEQLANGTAPLSIASHFLAAHQEDDESTNESKEFMQNILAEAYLGGAGATVGTLCTFTLAMALNPDVQKRAQAAIDEALHGERLPDFTDFGNIPYMDALLNEILRWHPGAPLGLFHSSNKDDVYEGYLVPKGTFISPNVWAILHDPAVYGEDVDEFRPERFLTKDGKRNDIPDSEIAFGFGRRICPGRTMGRDTLWITSASILATFDITNPVDKEGKPLDPASIEYSNSMSSRPPYFDCTFKLRSKAAEALVRNGLNEA.

Residues 17–37 traverse the membrane as a helical segment; sequence LGVVDLSLLGVGAVIAFAWLF. Asparagine 77, asparagine 274, and asparagine 297 each carry an N-linked (GlcNAc...) asparagine glycan. Cysteine 453 lines the heme pocket.

It belongs to the cytochrome P450 family. Heme is required as a cofactor.

The protein resides in the membrane. The catalysed reaction is cyathadiol + reduced [NADPH--hemoprotein reductase] + O2 = cyathatriol + oxidized [NADPH--hemoprotein reductase] + H2O + H(+). The protein operates within secondary metabolite biosynthesis. In terms of biological role, cytochrome P450 monooxygenase; part of the gene cluster that mediates the biosynthesis of erinacines, cyathane-xylosides that show unique biological activities, including leishmanicidal activity, stimulating activity for nerve growth-factor synthesis, and agonistic activity toward the kappa opioid receptor. Within the pathway, eriA catalyzes C-11 hydroxylation in the presence of the short chain dehydrogenase/reductase (SDR) eriH, which leads to the production of cyathatriol. The first step of the erinacines biosynthesis pathway is catalyzed by the geranylgeranyl diphosphate (GGPP) synthase eriE via conversion of farnesyl pyrophosphate and isopentyl pyrophosphate into geranylgeranyl pyrophosphate (GGPP). GGPP is then substrate of the diterpene cyclase eriG for the production of cyatha-3,12-diene. The cytochrome P450 monooxygenase eriI then hydroxylates cyatha-3,12-diene at C-14 of the seven-membered ring to produce erinacol, which is further hydroxylated at C-15 by the cytochrome P450 monooxygenase eriC to yield cyathadiol. The cytochrome P450 monooxygenase eriA then catalyzes C-11 hydroxylation in the presence of the short chain dehydrogenase/reductase (SDR) eriH, which leads to the production of cyathatriol. The acetyltransferase eriL converts cyathatriol into 11-O-acetyl-cyathatriol. The SDR eriH catalyzes further oxidation of 11-O-acetyl-cyathatriol into 1-O-acetylcyathin A3. Finally, the glycosyl transferase eriJ tranfers xylose from UDP-xylose onto C-14 of 11-O-acetyl-cyathatriol to form eracine Q. EriJ is also able to convert 11-O-acetyl-cyathatriol to eracine Q2 by using UDP-D-glucose as cosubstrate, but at a lower rate. The polypeptide is Cytochrome P450 monooxyhenase eriA (Hericium erinaceus (Lion's mane mushroom)).